The primary structure comprises 196 residues: Late protein I196L (196 aa).

2 consecutive repeat copies span residues 28-48 and 49-70. The 3; approximate repeat unit spans residues 71–92; that stretch reads SNYLTSAIPNIISDKEDDTPFS.

The protein belongs to the asfivirus I196L family.

The chain is Late protein I196L from African swine fever virus (strain Badajoz 1971 Vero-adapted) (Ba71V).